The chain runs to 22 residues: Cysteine-rich venom protein notescatin (22 aa).

Residues 1 to 15 (SNKKDYQKEIVDKHN) show a composition bias toward basic and acidic residues. Residues 1-22 (SNKKDYQKEIVDKHNALRRSVK) are disordered.

This sequence belongs to the CRISP family. In terms of processing, contains 8 disulfide bonds. As to expression, expressed by the venom gland.

The protein localises to the secreted. This is Cysteine-rich venom protein notescatin from Notechis scutatus scutatus (Mainland tiger snake).